Consider the following 169-residue polypeptide: Peptidyl-prolyl cis-trans isomerase (169 aa).

The PPIase cyclophilin-type domain occupies 5 to 168; that stretch reads FFDMTIGGQP…SEVKIAKCGQ (164 aa).

Belongs to the cyclophilin-type PPIase family.

Its subcellular location is the cytoplasm. It carries out the reaction [protein]-peptidylproline (omega=180) = [protein]-peptidylproline (omega=0). Its activity is regulated as follows. Binds cyclosporin A (CsA). CsA mediates some of its effects via an inhibitory action on PPIase. In terms of biological role, PPIases accelerate the folding of proteins. It catalyzes the cis-trans isomerization of proline imidic peptide bonds in oligopeptides. The polypeptide is Peptidyl-prolyl cis-trans isomerase (Unspecified eudicot DB-1992).